The chain runs to 622 residues: 1-deoxy-D-xylulose-5-phosphate synthase (622 aa).

Thiamine diphosphate is bound by residues His-74 and 115–117 (GHS). Asp-146 lines the Mg(2+) pocket. Residues 147–148 (GA), Asn-175, Tyr-286, and Glu-366 each bind thiamine diphosphate. Mg(2+) is bound at residue Asn-175.

The protein belongs to the transketolase family. DXPS subfamily. In terms of assembly, homodimer. Mg(2+) is required as a cofactor. It depends on thiamine diphosphate as a cofactor.

It catalyses the reaction D-glyceraldehyde 3-phosphate + pyruvate + H(+) = 1-deoxy-D-xylulose 5-phosphate + CO2. It participates in metabolic intermediate biosynthesis; 1-deoxy-D-xylulose 5-phosphate biosynthesis; 1-deoxy-D-xylulose 5-phosphate from D-glyceraldehyde 3-phosphate and pyruvate: step 1/1. Catalyzes the acyloin condensation reaction between C atoms 2 and 3 of pyruvate and glyceraldehyde 3-phosphate to yield 1-deoxy-D-xylulose-5-phosphate (DXP). In Carboxydothermus hydrogenoformans (strain ATCC BAA-161 / DSM 6008 / Z-2901), this protein is 1-deoxy-D-xylulose-5-phosphate synthase.